Consider the following 445-residue polypeptide: D-serine dehydratase (445 aa).

N6-(pyridoxal phosphate)lysine is present on Lys-118.

Belongs to the serine/threonine dehydratase family. DsdA subfamily. Monomer. Pyridoxal 5'-phosphate serves as cofactor.

It catalyses the reaction D-serine = pyruvate + NH4(+). This chain is D-serine dehydratase, found in Serratia proteamaculans (strain 568).